A 546-amino-acid chain; its full sequence is Choline/ethanolamine transporter FLVCR2 (546 aa).

The segment at 1 to 84 is disordered; it reads MVNESLNQEE…TLAQPSGLTH (84 aa). Over 1–93 the chain is Cytoplasmic; the sequence is MVNESLNQEE…HPNELVKEDS (93 aa). A compositionally biased stretch (polar residues) spans 22–49; that stretch reads QADTSYSTQPSVSIHPSVSGHPSVSIHP. 7 tandem repeats follow at residues 31 to 36, 37 to 42, 43 to 48, 49 to 54, 55 to 60, 61 to 66, and 67 to 72. The 9 X 6 AA tandem repeats of P-S-[VS]-S-[VIAG]-[HD] stretch occupies residues 31 to 84; that stretch reads PSVSIHPSVSGHPSVSIHPSVSGHPSVSIDPSVSVHPSSSAHPSTLAQPSGLTH. Residues 54–74 show a composition bias toward low complexity; that stretch reads HPSVSIDPSVSVHPSSSAHPS. One copy of the 8; approximate repeat lies at 73-78; it reads PSTLAQ. Residues 79 to 84 form a 9; approximate repeat; sequence PSGLTH. Residues 94 to 118 traverse the membrane as a helical segment; it reads VIKVSKRRWAVVLVFSCYSLCNAFQ. Residues asparagine 115, alanine 116, and tryptophan 119 each coordinate choline. Residues 119–136 are Extracellular-facing; it reads WIQYGSINNIFMNFYGVS. Residues 137-164 traverse the membrane as a helical segment; sequence AFAIDWLSMCYMLTYIPLLLPVAWMLEK. The Cytoplasmic portion of the chain corresponds to 165–166; the sequence is FG. A helical membrane pass occupies residues 167–186; that stretch reads LRTIAITGSALNCLGAWVKL. Over 187 to 193 the chain is Extracellular; that stretch reads GSLEPHL. The helical transmembrane segment at 194–222 threads the bilayer; that stretch reads FPVTMVGQVICSVAQVFILGMPSRIASVW. Leucine 212 provides a ligand contact to choline. Topologically, residues 223 to 227 are cytoplasmic; sequence FGANE. Residues 228 to 253 traverse the membrane as a helical segment; the sequence is VSTACSMAVFGNQLGIAIGFLVPPVL. Residues 254–258 are Extracellular-facing; the sequence is VPNIK. A helical transmembrane segment spans residues 259–288; it reads DQEKLAYHISIMFYIIGGVATLLFILVIIV. Topologically, residues 289-324 are cytoplasmic; that stretch reads FKEKPKYPPSRAQSLSYALATTDASYLSSIVRLFKN. Residues 325 to 355 form a helical membrane-spanning segment; that stretch reads LNFVLLVITYGLNAGAFYALSTLLNRMVIMH. Tyrosine 342 serves as a coordination point for choline. Residues 356–359 lie on the Extracellular side of the membrane; sequence FPGQ. Residues 360–388 traverse the membrane as a helical segment; the sequence is EVNAGRIGLTIVIAGMFGAMISGIWLDKS. Over 389-390 the chain is Cytoplasmic; sequence KT. A helical transmembrane segment spans residues 391 to 413; sequence YKETTLVVYIMTLVGMVVYTFTL. Topologically, residues 414–416 are extracellular; that stretch reads NLN. The helical transmembrane segment at 417–446 threads the bilayer; it reads HLWIVFITADSLGFFMTGYLPLGFEFAVEL. Topologically, residues 447 to 454 are cytoplasmic; it reads TYPESEGV. Residues 455–480 form a helical membrane-spanning segment; sequence SSGLLNVSAQVFGIIFTISQGQIIDN. A choline-binding site is contributed by glutamine 464. Over 481-482 the chain is Extracellular; it reads YG. A helical membrane pass occupies residues 483–505; it reads SVPGNIFLCVFLALGSALTAFIK. Over 506-546 the chain is Cytoplasmic; the sequence is SDLRRQRANKDAPETKVQEEEEEEEESNTSKVPTVLSEAHL. Basic and acidic residues predominate over residues 511 to 523; that stretch reads QRANKDAPETKVQ. The disordered stretch occupies residues 511-546; sequence QRANKDAPETKVQEEEEEEEESNTSKVPTVLSEAHL. The residue at position 535 (serine 535) is a Phosphoserine.

This sequence belongs to the major facilitator superfamily. Feline leukemia virus subgroup C receptor (TC 2.A.1.28.1) family. Interacts with components of electron transfer chain complexes III, IV and V including CYC1, NDUFA4, COX4I1, ATP5PD and ATP5F1C; these interactions occur in the absence of heme and are disrupted upon heme binding. Interacts with ATP2A2; this interaction occurs in the absence of heme and promotes ATP2A2 proteasomal degradation; the complex is dissociated upon heme binding. Interacts with HMOX1; this interaction is potentiated in the presence of heme.

It localises to the cell membrane. The protein localises to the mitochondrion membrane. Its subcellular location is the endoplasmic reticulum membrane. It catalyses the reaction choline(out) = choline(in). The catalysed reaction is ethanolamine(in) = ethanolamine(out). It carries out the reaction heme b(in) = heme b(out). Functionally, choline uniporter that specifically mediates choline uptake at the blood-brain-barrier. Responsible for the majority of choline uptake across the blood-brain-barrier from the circulation into the brain. Choline, a nutrient critical for brain development, is a precursor of phosphatidylcholine, as well as betaine. Also mediates transport of ethanolamine. Choline and ethanolamine transport is not coupled with proton transport and is exclusively driven by the choline gradient across the plasma membrane. However, the presence of an inwardly directed proton gradient enhances choline uptake. Also acts as a heme b transporter. Required to regulate mitochondrial respiration processes, ATP synthesis and thermogenesis. At low heme levels, interacts with components of electron transfer chain (ETC) complexes and ATP2A2, leading to ubiquitin-mediated degradation of ATP2A2 and inhibition of thermogenesis. Upon heme binding, dissociates from ETC complexes to allow switching from mitochondrial ATP synthesis to thermogenesis. The polypeptide is Choline/ethanolamine transporter FLVCR2 (Flvcr2) (Rattus norvegicus (Rat)).